Consider the following 144-residue polypeptide: Large ribosomal subunit protein uL15 (144 aa).

Positions 1-50 (MRLNTLSPAAGAKSAKKRVGRGIGSGLGKTGGRGVKGAGSRSGGGVRAGF) are disordered. Over residues 21–50 (RGIGSGLGKTGGRGVKGAGSRSGGGVRAGF) the composition is skewed to gly residues.

It belongs to the universal ribosomal protein uL15 family. As to quaternary structure, part of the 50S ribosomal subunit.

Functionally, binds to the 23S rRNA. This Tolumonas auensis (strain DSM 9187 / NBRC 110442 / TA 4) protein is Large ribosomal subunit protein uL15.